We begin with the raw amino-acid sequence, 511 residues long: Xylose import ATP-binding protein XylG (511 aa).

ABC transporter domains are found at residues Leu6–Glu244 and Phe261–Pro506. Gly38–Ser45 is a binding site for ATP.

The protein belongs to the ABC transporter superfamily. Xylose importer (TC 3.A.1.2.4) family. In terms of assembly, the complex is composed of two ATP-binding proteins (XylG), two transmembrane proteins (XylH) and a solute-binding protein (XylF).

It is found in the cell inner membrane. It carries out the reaction D-xylose(out) + ATP + H2O = D-xylose(in) + ADP + phosphate + H(+). Functionally, part of the ABC transporter complex XylFGH involved in xylose import. Responsible for energy coupling to the transport system. In Brucella abortus (strain 2308), this protein is Xylose import ATP-binding protein XylG.